We begin with the raw amino-acid sequence, 561 residues long: Nucleoprotein (561 aa).

Residues Met53–Ile237 form a binding site for the cap structure m7GTP region. Residues Asp380 and Glu382 each coordinate Mn(2+). The Zn(2+) site is built by Glu390, Cys497, His500, and Cys521. Asp525 lines the Mn(2+) pocket.

Belongs to the arenaviridae nucleocapsid protein family. Homomultimerizes to form the nucleocapsid. Binds to viral genomic RNA. Interacts with glycoprotein G2. Interacts with protein Z; this interaction probably directs the encapsidated genome to budding sites. Interacts with protein L; this interaction does not interfere with Z-L interaction. Interacts with host IKBKE (via Protein kinase domain); the interaction inhibits IKBKE kinase activity.

It is found in the virion. The protein localises to the host cytoplasm. Its function is as follows. Encapsidates the genome, protecting it from nucleases. The encapsidated genomic RNA is termed the nucleocapsid (NC). Serves as template for viral transcription and replication. The increased presence of protein N in host cell does not seem to trigger the switch from transcription to replication as observed in other negative strain RNA viruses. Through the interaction with host IKBKE, strongly inhibits the phosphorylation and nuclear translocation of host IRF3, a protein involved in interferon activation pathway, leading to the inhibition of interferon-beta and IRF3-dependent promoters activation. Also encodes a functional 3'-5' exoribonuclease that degrades preferentially dsRNA substrates and thereby participates in the suppression of interferon induction. In Allpahuayo mammarenavirus (isolate Rat/Peru/CLHP-2472/1997) (ALLV), this protein is Nucleoprotein.